An 805-amino-acid polypeptide reads, in one-letter code: MLISKKTLAVLIPEITHVSNNEICEKLQQIGIEVEAIRAFKNPDYLQLGILRAVTPHPHDNHLYVCQVQIDKNKQLNVVTGAVNIVDPNNLNKHVIVAKKGAELLNGLIIKTKNIKGIISDGMLCSYVDINPFSKHLIADGDDTHAIVLDNINRDEFGDYLSFLNLDDVVFEVTLPTNRSDLQSLIFLAKELAAVLKRPVFLEQKTTMTLREFYRFPLNLRNRAQANFFGGLFLRDVAITSSPWTTKGLLINQELRPVNCFVDQANMVTVYTGQPIHCHDADKIHGSVELKLATQLETMLALDNKEYEIKPGDLVVADEQGTIAIVGIIGSKRTMVDNTTNNIFFEVVNYNHERIKQTAQRLGVANFASRLMSKPISLQATENCLNYLQNNFLNPESIGKISKFSSTIKAPAFNRKIYLNFNQLRELIGVTKKQLNDHMIRNYLTSLGFKMENQIARAPAYRQDITVWQDISEELLKILDLNKIKEDEILSSTKLEKHEKLNAYDALQKLRTKLQTLGFHNVITYQLISPERARNFNLFGLSNLWEIKNPLSNERSVLRVGLIDSLLRVIQKNAAYKNKLGNIFEFSFVKTKDSNQLHIAALWLEKMFGSTYQKDQGVSVDIPAMKGLAQLIISNFGFNCDFEPITEGEYFTKNVGLKLVVFNEQIGYVGLIKDELLAPYDLKGRPVYGLEINLDRLLNSLNRLERSYTPISKLQDVFKDITFSFPRDESHFETFVKAIKKLQTIFKWELISVFDTEKDGVPITKYTVRYYLKNFTNTPLTLEQIKAVETQLKQQCELAKIALDL.

Residues 40-162 (FKNPDYLQLG…NRDEFGDYLS (123 aa)) enclose the tRNA-binding domain. In terms of domain architecture, B5 spans 412–486 (AFNRKIYLNF…KILDLNKIKE (75 aa)). The Mg(2+) site is built by Asp464, Asp470, Glu473, and Glu474.

It belongs to the phenylalanyl-tRNA synthetase beta subunit family. Type 1 subfamily. Tetramer of two alpha and two beta subunits. Requires Mg(2+) as cofactor.

Its subcellular location is the cytoplasm. It catalyses the reaction tRNA(Phe) + L-phenylalanine + ATP = L-phenylalanyl-tRNA(Phe) + AMP + diphosphate + H(+). The protein is Phenylalanine--tRNA ligase beta subunit (pheT) of Mycoplasma pneumoniae (strain ATCC 29342 / M129 / Subtype 1) (Mycoplasmoides pneumoniae).